Here is a 442-residue protein sequence, read N- to C-terminus: Casein kinase 1-like protein 10 (442 aa).

Residues 9-278 form the Protein kinase domain; the sequence is FKLGRKIGSG…LKRLFRDLFI (270 aa). ATP contacts are provided by residues 15–23 and K38; that span reads IGSGSFGEL. Residue D128 is the Proton acceptor of the active site. 2 disordered regions span residues 299–323 and 381–421; these read GSISKPRPNPKPALDPPGPSAERNE and AVMS…LSAR. Pro residues predominate over residues 305-317; it reads RPNPKPALDPPGP. A compositionally biased stretch (low complexity) spans 384–394; the sequence is SSSQPGSSGEL. Over residues 400–417 the composition is skewed to polar residues; it reads SKLFSSSAQKIQPVQETK.

Belongs to the protein kinase superfamily. CK1 Ser/Thr protein kinase family. Casein kinase I subfamily. Monomer. Autophosphorylated.

It localises to the cytoplasm. The protein resides in the cell junction. The protein localises to the plasmodesma. It catalyses the reaction L-seryl-[protein] + ATP = O-phospho-L-seryl-[protein] + ADP + H(+). It carries out the reaction L-threonyl-[protein] + ATP = O-phospho-L-threonyl-[protein] + ADP + H(+). Casein kinases are operationally defined by their preferential utilization of acidic proteins such as caseins as substrates. It can phosphorylate a large number of proteins. The protein is Casein kinase 1-like protein 10 of Arabidopsis thaliana (Mouse-ear cress).